A 392-amino-acid chain; its full sequence is 5-amino-6-(D-ribitylamino)uracil--L-tyrosine 4-hydroxyphenyl transferase (392 aa).

One can recognise a Radical SAM core domain in the interval 60 to 307; that stretch reads VTYVVNRNIN…MAIARLYLGK (248 aa). The [4Fe-4S] cluster site is built by Cys74, Cys78, and Cys81.

The protein belongs to the radical SAM superfamily. CofH family. As to quaternary structure, consists of two subunits, CofG and CofH. It depends on [4Fe-4S] cluster as a cofactor.

It catalyses the reaction 5-amino-6-(D-ribitylamino)uracil + L-tyrosine + S-adenosyl-L-methionine = 5-amino-5-(4-hydroxybenzyl)-6-(D-ribitylimino)-5,6-dihydrouracil + 2-iminoacetate + 5'-deoxyadenosine + L-methionine + H(+). It participates in cofactor biosynthesis; coenzyme F0 biosynthesis. Catalyzes the radical-mediated synthesis of 5-amino-5-(4-hydroxybenzyl)-6-(D-ribitylimino)-5,6-dihydrouracil from 5-amino-6-(D-ribitylamino)uracil and L-tyrosine. In Synechocystis sp. (strain ATCC 27184 / PCC 6803 / Kazusa), this protein is 5-amino-6-(D-ribitylamino)uracil--L-tyrosine 4-hydroxyphenyl transferase.